We begin with the raw amino-acid sequence, 208 residues long: ATP-dependent Clp protease proteolytic subunit (208 aa).

Ser-107 functions as the Nucleophile in the catalytic mechanism. His-132 is a catalytic residue.

It belongs to the peptidase S14 family. In terms of assembly, fourteen ClpP subunits assemble into 2 heptameric rings which stack back to back to give a disk-like structure with a central cavity, resembling the structure of eukaryotic proteasomes.

It localises to the cytoplasm. The catalysed reaction is Hydrolysis of proteins to small peptides in the presence of ATP and magnesium. alpha-casein is the usual test substrate. In the absence of ATP, only oligopeptides shorter than five residues are hydrolyzed (such as succinyl-Leu-Tyr-|-NHMec, and Leu-Tyr-Leu-|-Tyr-Trp, in which cleavage of the -Tyr-|-Leu- and -Tyr-|-Trp bonds also occurs).. Its function is as follows. Cleaves peptides in various proteins in a process that requires ATP hydrolysis. Has a chymotrypsin-like activity. Plays a major role in the degradation of misfolded proteins. The sequence is that of ATP-dependent Clp protease proteolytic subunit from Methylorubrum extorquens (strain CM4 / NCIMB 13688) (Methylobacterium extorquens).